Reading from the N-terminus, the 529-residue chain is Snake venom 5'-nucleotidase (529 aa).

Glycine 1 is a signal peptide. Zn(2+) is bound by residues aspartate 12 and histidine 14. Cysteines 27 and 32 form a disulfide. The Zn(2+) site is built by aspartate 60, asparagine 92, histidine 195, and histidine 218. N-linked (GlcNAc...) asparagine glycosylation is found at asparagine 308 and asparagine 322. 2 cysteine pairs are disulfide-bonded: cysteine 328-cysteine 333 and cysteine 340-cysteine 362. Arginine 329 is a binding site for AMP. Asparagine 365, arginine 370, and phenylalanine 393 together coordinate AMP. Cysteine 452 and cysteine 455 are oxidised to a cystine. Residues phenylalanine 476 and aspartate 482 each coordinate AMP. Serine 525 carries GPI-anchor amidated serine lipidation. The propeptide at alanine 526–leucine 529 is removed in mature form.

The protein belongs to the 5'-nucleotidase family. Zn(2+) is required as a cofactor. In terms of processing, venom 5'-nucleotidases (or a part thereof) may be released into the venom via exosome-like vesicles. They may be attached via a GPI anchor to the membrane of these vesicles. Soluble forms of 5'-nucleotidase might be released by cleavage of the ectodomain in the exosome-like vesicles or venom gland cells. In terms of tissue distribution, expressed by the venom gland.

The protein resides in the membrane. The enzyme catalyses a ribonucleoside 5'-phosphate + H2O = a ribonucleoside + phosphate. Its function is as follows. Hydrolyzes nucleotides into nucleosides. Snake venom 5'-nucleotidases are widely distributed among venomous snake taxa, but there is a lack of information about their biological activities. They have been shown to inhibit platelet aggregation. This effect may be due to the liberation of inhibitory AMP or adenosine by its action on ADP released upon initiation of aggregation. Venom 5'-nucleotidases are also known to synergistically act in vivo with other toxins like ADPases, phospholipases, and disintegrins to exert a more pronounced anti-coagulant effect. This Naja atra (Chinese cobra) protein is Snake venom 5'-nucleotidase.